A 501-amino-acid polypeptide reads, in one-letter code: MESVERKSESSYLGMRNMQPEQRLSLDPPRLRSTPQDELHDLLCVGFGPASLAIAIALHDALDPRLNKSASNIHAQPKICFLERQKQFAWHSGMLVPGSKMQISFIKDLATLRDPRSSFTFLNYLHQKGRLIHFTNLSTFLPARLEFEDYMRWCAQQFSDVVAYGEEVVEVIPGKSDPSSSVVDFFTVRSRNVETGEISARRTRKVVIAIGGTAKMPSGLPQDPRIIHSSKYCTTLPALLKDKSKPYNIAVLGSGQSAAEIFHDLQKRYPNSRTTLIMRDSAMRPSDDSPFVNEIFNPERVDKFYSQSAAERQRSLLADKATNYSVVRLELIEEIYNDMYLQRVKNPDETQWQHRILPERKITRVEHHGPQSRMRIHLKSSKPESEGAANDVKETLEVDALMVATGYNRNAHERLLSKVQHLRPTGQDQWKPHRDYRVEMDPSKVSSEAGIWLQGCNERTHGLSDSLLSVLAVRGGEMVQSIFGEQLERAAVQGHQLRAML.

The disordered stretch occupies residues 1 to 31 (MESVERKSESSYLGMRNMQPEQRLSLDPPRL). FAD-binding positions include 83 to 91 (ERQKQFAWH) and glutamine 102. Position 107 (lysine 107) interacts with substrate. Valine 168 lines the FAD pocket. NADP(+)-binding positions include 254-257 (SGQS) and arginine 279. Substrate is bound by residues 293-296 (NEIF) and asparagine 323. Residue 323–325 (NYS) participates in NADP(+) binding. The interval 366–390 (EHHGPQSRMRIHLKSSKPESEGAAN) is disordered. Residues 381–390 (SKPESEGAAN) are compositionally biased toward basic and acidic residues. 466–468 (SLL) lines the FAD pocket. Serine 469 is a substrate binding site.

It belongs to the lysine N(6)-hydroxylase/L-ornithine N(5)-oxygenase family. Homotetramer. The cofactor is FAD.

The catalysed reaction is L-ornithine + NADPH + O2 = N(5)-hydroxy-L-ornithine + NADP(+) + H2O. It catalyses the reaction L-ornithine + NADH + O2 = N(5)-hydroxy-L-ornithine + NAD(+) + H2O. Its pathway is siderophore biosynthesis; ferrichrome biosynthesis. Its function is as follows. L-ornithine N(5)-monooxygenase; part of the siderophore biosynthetic pathway. Aspergillus fumigatus produces four types of siderophores, low-molecular-mass iron chelators, including excreted fusarinine C (FsC) and triacetylfusarinine C (TAFC) for iron uptake; and intacellular ferricrocin (FC) for hyphal and hydroxyferricrocin (HFC) for conidial iron distribution and storage. TAFC consists of three N(2)-acetyl-N(5)-anhydromevalonyl-N(5)-hydroxyornithine residues cyclically linked by ester bonds; FC is a cyclic hexapeptide with the structure Gly-Ser-Gly-(N(5)-acetyl-N(5)-hydroxyornithine)x3. The biosynthesis of all four siderophores depends on the hydroxylation of ornithine, catalyzed by the monooxygenase sidA. SidA is highly specific for its substrate, only hydrolyzing l-ornithine, and has preference for NADPH over NADH, NADPH playing a role in stabilization of the C4a-hydroperoxyflavin intermediate. Subsequently, the pathways for biosynthesis of extra- and intracellular siderophores split. For biosynthesis of extracellular siderophores, the transacylase sidF transfers anhydromevalonyl to N(5)-hydroxyornithine. The required anhydromevalonyl-CoA moiety is derived from mevalonate by CoA ligation and dehydration catalyzed by sidI and sidH respectively. The acetylation of N(5)-hydroxyornithine for FC biosynthesis involves the constitutively expressed sidL. FC is hydroxylated to HFC by an as yet uncharacterized enzyme during conidiation. Assembly of fusarinine C (FsC) and FC is catalyzed by two different nonribosomal peptide synthetases (NRPS), sidD and sidC respectively. Subsequently, sidG catalyzes N2-acetylation of FsC for forming TAFC. Both extra- and intracellular siderophores are crucial for growth during iron limitation and virulence. The sequence is that of L-ornithine N(5)-monooxygenase from Aspergillus fumigatus (strain ATCC MYA-4609 / CBS 101355 / FGSC A1100 / Af293) (Neosartorya fumigata).